A 232-amino-acid chain; its full sequence is Orotidine 5'-phosphate decarboxylase (232 aa).

Substrate contacts are provided by residues D14, K36, 63–72 (DLKFHDIPNT), T122, R183, Q192, G212, and R213. K65 acts as the Proton donor in catalysis.

The protein belongs to the OMP decarboxylase family. Type 1 subfamily. In terms of assembly, homodimer.

It catalyses the reaction orotidine 5'-phosphate + H(+) = UMP + CO2. Its pathway is pyrimidine metabolism; UMP biosynthesis via de novo pathway; UMP from orotate: step 2/2. Its function is as follows. Catalyzes the decarboxylation of orotidine 5'-monophosphate (OMP) to uridine 5'-monophosphate (UMP). The chain is Orotidine 5'-phosphate decarboxylase from Psychrobacter arcticus (strain DSM 17307 / VKM B-2377 / 273-4).